Consider the following 330-residue polypeptide: Polyprenal reductase (330 aa).

The Cytoplasmic segment spans residues 1–19 (MASWVGTELSALNPLRTLW). Residues 20-40 (LALAAAFLLALLLQLAPAGLL) traverse the membrane as a helical segment. At 41 to 74 (PNCALFQDLIRYGKTKLSGPRRPAVCRAFDVPKR) the chain is on the lumenal side. A helical transmembrane segment spans residues 75–95 (YFSHFYVVSVLWNGFLLWFLS). Over 96 to 132 (RSLFLGAPFPNWLRALLRTLGSTQFRALEMESKASQM) the chain is Cytoplasmic. Residues 133–153 (LVGELALSAFLVLVFLWVHSV) form a helical membrane-spanning segment. Topologically, residues 154–168 (RRLFECFYISVFSNA) are lumenal. A helical membrane pass occupies residues 169–189 (VMHVVQYCFGLVYYVLVGLTV). The Cytoplasmic portion of the chain corresponds to 190–206 (LSQVPMDDKNVYMLGKN). The chain crosses the membrane as a helical span at residues 207 to 227 (LLLPARWFHVLGMMMFLWSSA). The Lumenal segment spans residues 228–277 (HQYECHVILSNLRRNKKGAIVHCQHRIPFGDWFEYVSSANYLAELMIYIS). A helical transmembrane segment spans residues 278–298 (MAVTFGFHNFTWWLVVAYVFF). At 299-330 (CQALSAFFNHKFYKSTFVSYPKHRKAFLPFLF) the chain is on the cytoplasmic side.

The protein belongs to the steroid 5-alpha reductase family. Polyprenal reductase subfamily.

Its subcellular location is the endoplasmic reticulum membrane. The catalysed reaction is a di-trans,poly-cis-dolichal + NADP(+) = a di-trans,poly-cis-polyprenal + NADPH + H(+). It catalyses the reaction a 3-oxo-5alpha-steroid + NADP(+) = a 3-oxo-Delta(4)-steroid + NADPH + H(+). It carries out the reaction androst-4-ene-3,17-dione + NADPH + H(+) = 5alpha-androstan-3,17-dione + NADP(+). The enzyme catalyses 17beta-hydroxy-5alpha-androstan-3-one + NADP(+) = testosterone + NADPH + H(+). Its pathway is protein modification; protein glycosylation. In terms of biological role, plays a key role in early steps of protein N-linked glycosylation by being involved in the conversion of polyprenol into dolichol. Acts as a polyprenal reductase that mediates the reduction of polyprenal into dolichal in a NADP-dependent mechanism. Dolichols are required for the synthesis of dolichol-linked monosaccharides and the oligosaccharide precursor used for N-glycosylation. Also able to convert testosterone (T) into 5-alpha-dihydrotestosterone (DHT). This chain is Polyprenal reductase, found in Mesocricetus auratus (Golden hamster).